The chain runs to 603 residues: Elongation factor 4 (603 aa).

One can recognise a tr-type G domain in the interval 7-189 (KKIRNFCIIA…SVVKNVPPPE (183 aa)). GTP contacts are provided by residues 19–24 (DHGKST) and 136–139 (NKID).

The protein belongs to the TRAFAC class translation factor GTPase superfamily. Classic translation factor GTPase family. LepA subfamily.

It localises to the cell membrane. The catalysed reaction is GTP + H2O = GDP + phosphate + H(+). Its function is as follows. Required for accurate and efficient protein synthesis under certain stress conditions. May act as a fidelity factor of the translation reaction, by catalyzing a one-codon backward translocation of tRNAs on improperly translocated ribosomes. Back-translocation proceeds from a post-translocation (POST) complex to a pre-translocation (PRE) complex, thus giving elongation factor G a second chance to translocate the tRNAs correctly. Binds to ribosomes in a GTP-dependent manner. The protein is Elongation factor 4 of Acetivibrio thermocellus (strain ATCC 27405 / DSM 1237 / JCM 9322 / NBRC 103400 / NCIMB 10682 / NRRL B-4536 / VPI 7372) (Clostridium thermocellum).